The following is a 49-amino-acid chain: U1-theraphotoxin-Lp1b (49 aa).

4 disulfides stabilise this stretch: Cys4-Cys17, Cys8-Cys41, Cys22-Cys24, and Cys35-Cys46.

Expressed by the venom gland.

The protein resides in the secreted. Toxin that causes irreversible contractile paralysis into adult Aedes aegypti resulting in 100% mortality after 24 hours. This is U1-theraphotoxin-Lp1b from Lasiodora parahybana (Brazilian salmon pink birdeater).